The sequence spans 236 residues: Uridylate kinase (236 aa).

Residue 9-12 (KFSG) coordinates ATP. Positions 17-22 (GNSGFG) are involved in allosteric activation by GTP. Residue Gly-51 participates in UMP binding. ATP is bound by residues Gly-52 and Arg-56. UMP is bound by residues Asp-72 and 133-140 (TGNPFFTT). Positions 160, 166, and 169 each coordinate ATP.

The protein belongs to the UMP kinase family. In terms of assembly, homohexamer.

The protein localises to the cytoplasm. The enzyme catalyses UMP + ATP = UDP + ADP. Its pathway is pyrimidine metabolism; CTP biosynthesis via de novo pathway; UDP from UMP (UMPK route): step 1/1. Allosterically activated by GTP. Inhibited by UTP. Catalyzes the reversible phosphorylation of UMP to UDP. In Helicobacter hepaticus (strain ATCC 51449 / 3B1), this protein is Uridylate kinase.